The following is a 548-amino-acid chain: Chaperonin GroEL (548 aa).

Residues 29–32 (TMGP), lysine 50, 86–90 (DGTTT), glycine 414, 478–480 (NAA), and aspartate 494 each bind ATP.

It belongs to the chaperonin (HSP60) family. As to quaternary structure, forms a cylinder of 14 subunits composed of two heptameric rings stacked back-to-back. Interacts with the co-chaperonin GroES.

The protein localises to the cytoplasm. The catalysed reaction is ATP + H2O + a folded polypeptide = ADP + phosphate + an unfolded polypeptide.. In terms of biological role, together with its co-chaperonin GroES, plays an essential role in assisting protein folding. The GroEL-GroES system forms a nano-cage that allows encapsulation of the non-native substrate proteins and provides a physical environment optimized to promote and accelerate protein folding. Functionally, may play a protective role against the defense mechanisms generated by the infected macrophages. The sequence is that of Chaperonin GroEL from Legionella pneumophila.